The sequence spans 86 residues: Cell division topological specificity factor (86 aa).

Belongs to the MinE family.

Its function is as follows. Prevents the cell division inhibition by proteins MinC and MinD at internal division sites while permitting inhibition at polar sites. This ensures cell division at the proper site by restricting the formation of a division septum at the midpoint of the long axis of the cell. This Rhizobium rhizogenes (strain K84 / ATCC BAA-868) (Agrobacterium radiobacter) protein is Cell division topological specificity factor.